The following is a 135-amino-acid chain: Ribosome-binding factor A (135 aa).

This sequence belongs to the RbfA family. In terms of assembly, monomer. Binds 30S ribosomal subunits, but not 50S ribosomal subunits or 70S ribosomes.

The protein localises to the cytoplasm. Functionally, one of several proteins that assist in the late maturation steps of the functional core of the 30S ribosomal subunit. Associates with free 30S ribosomal subunits (but not with 30S subunits that are part of 70S ribosomes or polysomes). Required for efficient processing of 16S rRNA. May interact with the 5'-terminal helix region of 16S rRNA. The sequence is that of Ribosome-binding factor A from Aliivibrio fischeri (strain ATCC 700601 / ES114) (Vibrio fischeri).